Consider the following 656-residue polypeptide: Chromosomal replication initiator protein DnaA (656 aa).

Residues 1–100 (MADVPADLAA…TAGEPAGPAP (100 aa)) form a domain I, interacts with DnaA modulators region. Positions 91 to 313 (TAGEPAGPAP…PAPATGPGEP (223 aa)) are disordered. A compositionally biased stretch (pro residues) spans 97–109 (GPAPQAPQSPPSR). Residues 101 to 315 (QAPQSPPSRP…PATGPGEPTA (215 aa)) form a domain II region. 2 stretches are compositionally biased toward basic and acidic residues: residues 126–144 (GREEYRDRDEYEGYGRNRA) and 231–273 (QRGD…RDLP). Residues 291 to 313 (GPATGAPGPLAAQPAPATGPGEP) show a composition bias toward low complexity. The segment at 316–532 (RLNPKYLFDT…GALIRVTAFA (217 aa)) is domain III, AAA+ region. 4 residues coordinate ATP: Gly-360, Gly-362, Lys-363, and Thr-364. The interval 533 to 656 (SLNRQPVDLG…TELTNRIKNG (124 aa)) is domain IV, binds dsDNA.

This sequence belongs to the DnaA family. Oligomerizes as a right-handed, spiral filament on DNA at oriC.

It localises to the cytoplasm. Its function is as follows. Plays an essential role in the initiation and regulation of chromosomal replication. ATP-DnaA binds to the origin of replication (oriC) to initiate formation of the DNA replication initiation complex once per cell cycle. Binds the DnaA box (a 9 base pair repeat at the origin) and separates the double-stranded (ds)DNA. Forms a right-handed helical filament on oriC DNA; dsDNA binds to the exterior of the filament while single-stranded (ss)DNA is stabiized in the filament's interior. The ATP-DnaA-oriC complex binds and stabilizes one strand of the AT-rich DNA unwinding element (DUE), permitting loading of DNA polymerase. After initiation quickly degrades to an ADP-DnaA complex that is not apt for DNA replication. Binds acidic phospholipids. The polypeptide is Chromosomal replication initiator protein DnaA (Streptomyces coelicolor (strain ATCC BAA-471 / A3(2) / M145)).